A 383-amino-acid polypeptide reads, in one-letter code: Probable mannan endo-1,4-beta-mannosidase A (383 aa).

The signal sequence occupies residues 1–21 (MKLSNALLTLASLALANVSTA). Asparagine 17 carries an N-linked (GlcNAc...) asparagine glycan. Substrate is bound at residue tryptophan 92. Asparagine 194 is a glycosylation site (N-linked (GlcNAc...) asparagine). A substrate-binding site is contributed by asparagine 205. Glutamate 206 serves as the catalytic Proton donor. Asparagine 263 carries an N-linked (GlcNAc...) asparagine glycan. Position 281 (tyrosine 281) interacts with substrate. The active-site Nucleophile is glutamate 314. Residue tryptophan 344 coordinates substrate.

Belongs to the glycosyl hydrolase 5 (cellulase A) family.

Its subcellular location is the secreted. It carries out the reaction Random hydrolysis of (1-&gt;4)-beta-D-mannosidic linkages in mannans, galactomannans and glucomannans.. Endo-1,4-mannanase, a crucial enzyme for depolymerization of seed galactomannans and wood galactoglucomannans. This chain is Probable mannan endo-1,4-beta-mannosidase A (manA), found in Aspergillus niger (strain ATCC MYA-4892 / CBS 513.88 / FGSC A1513).